A 230-amino-acid chain; its full sequence is Cell division ATP-binding protein FtsE (230 aa).

Residues 4–229 (IEMRDVVKKY…DESKGEYGYD (226 aa)) form the ABC transporter domain. 37 to 44 (GPSGAGKS) lines the ATP pocket.

Belongs to the ABC transporter superfamily. In terms of assembly, homodimer. Interacts with FtsX; forms a membrane-associated complex. Interacts with pcsB.

The protein resides in the cell membrane. It catalyses the reaction ATP + H2O = ADP + phosphate + H(+). In terms of biological role, part of the ABC transporter FtsEX involved in cellular division. Has ATPase activity. Essential for cell division and viability. The sequence is that of Cell division ATP-binding protein FtsE from Streptococcus pneumoniae serotype 2 (strain D39 / NCTC 7466).